Here is a 388-residue protein sequence, read N- to C-terminus: Protochlorophyllide reductase A, chloroplastic (388 aa).

The transit peptide at 1–74 directs the protein to the chloroplast; sequence MALQLLPSTL…SPSGKKTLRQ (74 aa). Over residues 48 to 68 the composition is skewed to low complexity; the sequence is VATAPSPVTTSPGSTASSPSG. Residues 48 to 69 form a disordered region; the sequence is VATAPSPVTTSPGSTASSPSGK.

This sequence belongs to the short-chain dehydrogenases/reductases (SDR) family. POR subfamily.

Its subcellular location is the plastid. It localises to the chloroplast. The catalysed reaction is chlorophyllide a + NADP(+) = protochlorophyllide a + NADPH + H(+). It participates in porphyrin-containing compound metabolism; chlorophyll biosynthesis. Functionally, phototransformation of protochlorophyllide (Pchlide) to chlorophyllide (Chlide). This is Protochlorophyllide reductase A, chloroplastic (PORA) from Hordeum vulgare (Barley).